The chain runs to 557 residues: MTMLKDPSKKYRAFPTIELPDRTWPSKTITEAPIWCSSDLRDGNQSLIEPMDSEKKLRFWKTLVQVGVKEIEASFPSASQTDFDFVRTLIEDGHIPDDTTIQVLTQAREDLIARTFESLRGAKKAIVHLYNATSPSFRRIVFNQDKQGVKDIAVNAAKLFVKYAAQQPETQWTFQYSPETFSATELEFAKEVCDAVIEVWNPTPEHKVILNLPATVEVATPNIYADQIEWFCRNISRRDSVIISLHCHNDRGTGIAATELGLMAGADRAEGCLFGNGERTGNVDLVTLALNLYTQGIDPQLDFSDIDGVRKVVEECNQLPVHPRHPYVGDLVHTAFSGSHQDAIRKGFAKQQDGELWEVPYLPIDPADIGRSYEAVIRVNSQSGKGGITYLLEQEYGISLPRRMQIEFSQVVQGETDRLGLEMTAQQIYSLLHKEYLQANSPYALVSHRLQEENGHSAVEVEVAGEGETTLHWRGKGNGALEALVAGLPIAVEIMDYNEHAIGAGTNAKAAAYIELRVAGGRPVHGVGIDENITTASFKALFSALNRSLSQQEAKAA.

The Pyruvate carboxyltransferase domain maps to 33 to 307; the sequence is PIWCSSDLRD…DPQLDFSDID (275 aa). Mg(2+) contacts are provided by aspartate 42, histidine 246, histidine 248, and asparagine 282. The regulatory domain stretch occupies residues 439-557; sequence ANSPYALVSH…SLSQQEAKAA (119 aa).

This sequence belongs to the alpha-IPM synthase/homocitrate synthase family. LeuA type 2 subfamily. In terms of assembly, homodimer. It depends on Mg(2+) as a cofactor.

Its subcellular location is the cytoplasm. The catalysed reaction is 3-methyl-2-oxobutanoate + acetyl-CoA + H2O = (2S)-2-isopropylmalate + CoA + H(+). The protein operates within amino-acid biosynthesis; L-leucine biosynthesis; L-leucine from 3-methyl-2-oxobutanoate: step 1/4. Its function is as follows. Catalyzes the condensation of the acetyl group of acetyl-CoA with 3-methyl-2-oxobutanoate (2-ketoisovalerate) to form 3-carboxy-3-hydroxy-4-methylpentanoate (2-isopropylmalate). This chain is 2-isopropylmalate synthase, found in Pseudomonas putida (strain W619).